We begin with the raw amino-acid sequence, 116 residues long: Bacterial microcompartment shell protein CutR (116 aa).

One can recognise a BMC circularly permuted domain in the interval Arg-10–Phe-108.

This sequence belongs to the EutS/PduU family. Has been crystallized in 5 structures (all are mutated, 3 have an N-terminal His-tag), most are homohexameric with a central pore. In two the homohexamer lies flat with a beta-barrel on the flat face created by the protruding N termini of the six chains. In 2 others the hexamer is not flat but has a six-fold screw axis; the screw pitch is 33.8 or 41.9 Angstroms depending on the structure. Interacts with the BMC major shell protein.

It is found in the bacterial microcompartment. The protein operates within amine and polyamine metabolism; choline degradation. Its function is as follows. A minor shell protein of the choline degradation-specific bacterial microcompartment (BMC). Proteins such as this one with circularly permuted BMC domains may play a key role in conferring heterogeneity and flexibility in this BMC. The polypeptide is Bacterial microcompartment shell protein CutR (Streptococcus intermedius (strain ATCC 27335 / DSM 20573 / CCUG 32759 / CIP 103248 / JCM 12996 / LMG 17840 / NCTC 11324 / SK54 / 1877)).